Consider the following 256-residue polypeptide: Putative transposase for insertion sequence element IS112 (256 aa).

It belongs to the transposase 11 family.

Its function is as follows. Involved in the transposition of the insertion sequence IS112 which inactivates the SalI restriction-modification system. The sequence is that of Putative transposase for insertion sequence element IS112 from Streptomyces albus G.